The following is a 358-amino-acid chain: MKPSILEKLQQLGDRLEEVTHLLGQPEATSDMDNYRKLTREHAELTPVVEVFQNYRLAQSDLADAEEMLSDPEMKDFAAEEIEAAKAKIDELDTELQKLLLPKDADDDKNIFIEIRAGTGGDEAALFAGDLLRMYSRYAERNRWQVEIVSANESELGGYKEVIARIVGLGAYSRLKFESGGHRVQRVPATESQGRIHTSACTVAVMPEADELEDIELNPADLRTDTFRASGAGGQHINKTDSAVRITHLPTGMVVECQDGRSQHANKAQAMKVLAARLNDAQKREVQAKEAAERKSLIGSGDRSERIRTYNYPQGRVTDHRINLTLHKLDFVMDGDLAEITDALIAEHQAELLAAMGD.

N5-methylglutamine is present on Gln235.

This sequence belongs to the prokaryotic/mitochondrial release factor family. Methylated by PrmC. Methylation increases the termination efficiency of RF1.

It is found in the cytoplasm. Peptide chain release factor 1 directs the termination of translation in response to the peptide chain termination codons UAG and UAA. The sequence is that of Peptide chain release factor 1 from Neisseria gonorrhoeae (strain ATCC 700825 / FA 1090).